The primary structure comprises 302 residues: Homoserine O-acetyltransferase (302 aa).

Catalysis depends on Cys142, which acts as the Acyl-thioester intermediate. Substrate-binding residues include Lys163 and Ser192. The active-site Proton acceptor is the His235. The active site involves Glu237. Arg249 is a substrate binding site.

Belongs to the MetA family.

The protein resides in the cytoplasm. It carries out the reaction L-homoserine + acetyl-CoA = O-acetyl-L-homoserine + CoA. It participates in amino-acid biosynthesis; L-methionine biosynthesis via de novo pathway; O-acetyl-L-homoserine from L-homoserine: step 1/1. Functionally, transfers an acetyl group from acetyl-CoA to L-homoserine, forming acetyl-L-homoserine. The polypeptide is Homoserine O-acetyltransferase (Bacillus pumilus (strain SAFR-032)).